Consider the following 357-residue polypeptide: 5-hydroxytryptamine receptor 5A (357 aa).

The Extracellular segment spans residues methionine 1–leucine 36. Residues asparagine 6 and asparagine 21 are each glycosylated (N-linked (GlcNAc...) asparagine). Residues serine 37–alanine 63 traverse the membrane as a helical segment. Residues threonine 64–histidine 76 are Cytoplasmic-facing. A helical membrane pass occupies residues asparagine 77 to serine 103. The Extracellular segment spans residues glycine 104–cysteine 114. Cysteines 114 and 192 form a disulfide. The helical transmembrane segment at glutamine 115–leucine 137 threads the bilayer. Aspartate 121 contributes to the serotonin binding site. The Cytoplasmic segment spans residues aspartate 138 to lysine 155. Residues arginine 156–proline 176 form a helical membrane-spanning segment. The Extracellular segment spans residues leucine 177–proline 198. A helical membrane pass occupies residues serine 199–tyrosine 220. The Cytoplasmic segment spans residues tryptophan 221–valine 287. A helical transmembrane segment spans residues glycine 288–serine 312. Residues tryptophan 313–aspartate 314 are Extracellular-facing. The chain crosses the membrane as a helical span at residues isoleucine 315 to threonine 339. The Cytoplasmic segment spans residues alanine 340 to glutamine 357.

It belongs to the G-protein coupled receptor 1 family. In terms of tissue distribution, central nervous system.

It localises to the cell membrane. Its function is as follows. G-protein coupled receptor for 5-hydroxytryptamine (serotonin), a biogenic hormone that functions as a neurotransmitter, a hormone and a mitogen. Also functions as a receptor for ergot alkaloid derivatives and other psychoactive substances. Ligand binding causes a conformation change that triggers signaling via guanine nucleotide-binding proteins (G proteins) and modulates the activity of downstream effectors. Htr5a is coupled to G(i)/G(o) G alpha proteins and mediates inhibitory neurotransmission: signaling inhibits adenylate cyclase activity and activates a phosphatidylinositol-calcium second messenger system that regulates the release of Ca(2+) ions from intracellular stores. The polypeptide is 5-hydroxytryptamine receptor 5A (Rattus norvegicus (Rat)).